A 154-amino-acid polypeptide reads, in one-letter code: Small ribosomal subunit protein uS7 (154 aa).

The protein belongs to the universal ribosomal protein uS7 family.

In Nicotiana plumbaginifolia (Leadwort-leaved tobacco), this protein is Small ribosomal subunit protein uS7 (RPS5).